The primary structure comprises 739 residues: Catalase-peroxidase 2 (739 aa).

A signal peptide spans 1–26 (MKKSTIPTLSALTLAMSLAFGGSVIA). The segment at residues 105–227 (WHSAGVYRIF…MGATQMGLIY (123 aa)) is a cross-link (tryptophyl-tyrosyl-methioninium (Trp-Tyr) (with M-253)). The active-site Proton acceptor is the His-106. The segment at residues 227-253 (YVNPEGPNGVPDPLASAKEIRDTFGRM) is a cross-link (tryptophyl-tyrosyl-methioninium (Tyr-Met) (with W-105)). His-268 contacts heme b.

The protein belongs to the peroxidase family. Peroxidase/catalase subfamily. In terms of assembly, homodimer or homotetramer. Heme b is required as a cofactor. In terms of processing, formation of the three residue Trp-Tyr-Met cross-link is important for the catalase, but not the peroxidase activity of the enzyme.

It catalyses the reaction H2O2 + AH2 = A + 2 H2O. The enzyme catalyses 2 H2O2 = O2 + 2 H2O. In terms of biological role, bifunctional enzyme with both catalase and broad-spectrum peroxidase activity. The chain is Catalase-peroxidase 2 from Shewanella sp. (strain MR-7).